We begin with the raw amino-acid sequence, 692 residues long: Elongation factor G (692 aa).

Residues 8–283 (KNTRNIGIMA…AVVDYLPSPV (276 aa)) form the tr-type G domain. GTP contacts are provided by residues 17–24 (AHIDAGKT), 81–85 (DTPGH), and 135–138 (NKMD).

The protein belongs to the TRAFAC class translation factor GTPase superfamily. Classic translation factor GTPase family. EF-G/EF-2 subfamily.

It localises to the cytoplasm. Functionally, catalyzes the GTP-dependent ribosomal translocation step during translation elongation. During this step, the ribosome changes from the pre-translocational (PRE) to the post-translocational (POST) state as the newly formed A-site-bound peptidyl-tRNA and P-site-bound deacylated tRNA move to the P and E sites, respectively. Catalyzes the coordinated movement of the two tRNA molecules, the mRNA and conformational changes in the ribosome. The sequence is that of Elongation factor G from Exiguobacterium sp. (strain ATCC BAA-1283 / AT1b).